The following is a 349-amino-acid chain: Aspartate-semialdehyde dehydrogenase (349 aa).

Residues 12-15 (TGSV) and 39-40 (NS) contribute to the NADP(+) site. Arginine 113 is a binding site for phosphate. The active-site Acyl-thioester intermediate is cysteine 148. Glutamine 175 contributes to the substrate binding site. 178-179 (SG) provides a ligand contact to NADP(+). Glutamate 201 is a binding site for substrate. Residue lysine 204 coordinates phosphate. Arginine 234 is a binding site for substrate. Histidine 241 functions as the Proton acceptor in the catalytic mechanism. 326 to 327 (NT) is a binding site for NADP(+).

It belongs to the aspartate-semialdehyde dehydrogenase family. As to quaternary structure, homodimer.

It carries out the reaction L-aspartate 4-semialdehyde + phosphate + NADP(+) = 4-phospho-L-aspartate + NADPH + H(+). The protein operates within amino-acid biosynthesis; L-lysine biosynthesis via DAP pathway; (S)-tetrahydrodipicolinate from L-aspartate: step 2/4. It functions in the pathway amino-acid biosynthesis; L-methionine biosynthesis via de novo pathway; L-homoserine from L-aspartate: step 2/3. Its pathway is amino-acid biosynthesis; L-threonine biosynthesis; L-threonine from L-aspartate: step 2/5. Catalyzes the NADPH-dependent formation of L-aspartate-semialdehyde (L-ASA) by the reductive dephosphorylation of L-aspartyl-4-phosphate. This is Aspartate-semialdehyde dehydrogenase from Leptospira interrogans serogroup Icterohaemorrhagiae serovar Lai (strain 56601).